We begin with the raw amino-acid sequence, 342 residues long: tRNA dimethylallyltransferase (342 aa).

39-46 (GPTGSGKT) provides a ligand contact to ATP. 41–46 (TGSGKT) serves as a coordination point for substrate. The segment at 64-67 (DSMQ) is interaction with substrate tRNA.

Belongs to the IPP transferase family. In terms of assembly, monomer. Requires Mg(2+) as cofactor.

It catalyses the reaction adenosine(37) in tRNA + dimethylallyl diphosphate = N(6)-dimethylallyladenosine(37) in tRNA + diphosphate. Catalyzes the transfer of a dimethylallyl group onto the adenine at position 37 in tRNAs that read codons beginning with uridine, leading to the formation of N6-(dimethylallyl)adenosine (i(6)A). The polypeptide is tRNA dimethylallyltransferase (Chlamydia caviae (strain ATCC VR-813 / DSM 19441 / 03DC25 / GPIC) (Chlamydophila caviae)).